Reading from the N-terminus, the 149-residue chain is Flagellar assembly factor FliW (149 aa).

The protein belongs to the FliW family. In terms of assembly, interacts with translational regulator CsrA and flagellin(s).

The protein localises to the cytoplasm. Acts as an anti-CsrA protein, binds CsrA and prevents it from repressing translation of its target genes, one of which is flagellin. Binds to flagellin and participates in the assembly of the flagellum. The chain is Flagellar assembly factor FliW from Thermotoga maritima (strain ATCC 43589 / DSM 3109 / JCM 10099 / NBRC 100826 / MSB8).